We begin with the raw amino-acid sequence, 142 residues long: Large ribosomal subunit protein uL13 (142 aa).

This sequence belongs to the universal ribosomal protein uL13 family. As to quaternary structure, part of the 50S ribosomal subunit.

This protein is one of the early assembly proteins of the 50S ribosomal subunit, although it is not seen to bind rRNA by itself. It is important during the early stages of 50S assembly. This Francisella tularensis subsp. holarctica (strain FTNF002-00 / FTA) protein is Large ribosomal subunit protein uL13.